The sequence spans 165 residues: Transcription elongation factor A protein-like 1 (165 aa).

2 disordered regions span residues 1-66 (MENS…LLPE) and 89-124 (IPMEQPPCGIGKHKLEEGSFKERLARSRPQFRGDIH). A compositionally biased stretch (acidic residues) spans 33-60 (CSEDDQSSEDLSSEEQSSDEEFFPEELL). The span at 101-124 (HKLEEGSFKERLARSRPQFRGDIH) shows a compositional bias: basic and acidic residues.

The protein belongs to the TFS-II family. TFA subfamily.

Its subcellular location is the nucleus. May be involved in transcriptional regulation. Modulates various viral and cellular promoters in a promoter context-dependent manner. Does not bind DNA directly. The sequence is that of Transcription elongation factor A protein-like 1 from Rattus norvegicus (Rat).